The following is a 169-amino-acid chain: Holo-[acyl-carrier-protein] synthase (169 aa).

Positions 8 and 50 each coordinate Mg(2+).

This sequence belongs to the P-Pant transferase superfamily. AcpS family. Mg(2+) serves as cofactor.

The protein resides in the cytoplasm. It carries out the reaction apo-[ACP] + CoA = holo-[ACP] + adenosine 3',5'-bisphosphate + H(+). Transfers the 4'-phosphopantetheine moiety from coenzyme A to a Ser of acyl-carrier-protein. This Thermotoga maritima (strain ATCC 43589 / DSM 3109 / JCM 10099 / NBRC 100826 / MSB8) protein is Holo-[acyl-carrier-protein] synthase.